Here is a 92-residue protein sequence, read N- to C-terminus: Small ribosomal subunit protein uS19 (92 aa).

It belongs to the universal ribosomal protein uS19 family.

In terms of biological role, protein S19 forms a complex with S13 that binds strongly to the 16S ribosomal RNA. This Parvibaculum lavamentivorans (strain DS-1 / DSM 13023 / NCIMB 13966) protein is Small ribosomal subunit protein uS19.